We begin with the raw amino-acid sequence, 248 residues long: Tyrosine recombinase XerD-like (248 aa).

Residues 1–72 (MKSYIEPFIA…TANQFLYYLY (72 aa)) enclose the Core-binding (CB) domain. The 164-residue stretch at 85–248 (DTMKVMRTEK…PVTLEKYYKS (164 aa)) folds into the Tyr recombinase domain. Catalysis depends on residues lysine 149 and arginine 213. Tyrosine 245 serves as the catalytic O-(3'-phospho-DNA)-tyrosine intermediate.

This sequence belongs to the 'phage' integrase family. XerD-like subfamily.

The protein resides in the cytoplasm. In terms of biological role, putative tyrosine recombinase. Not involved in the cutting and rejoining of the recombining DNA molecules on dif(SL) site. In Streptococcus pyogenes serotype M28 (strain MGAS6180), this protein is Tyrosine recombinase XerD-like.